Consider the following 505-residue polypeptide: ATP synthase subunit beta (505 aa).

ATP is bound at residue 157–164 (GGAGVGKT).

The protein belongs to the ATPase alpha/beta chains family. F-type ATPases have 2 components, CF(1) - the catalytic core - and CF(0) - the membrane proton channel. CF(1) has five subunits: alpha(3), beta(3), gamma(1), delta(1), epsilon(1). CF(0) has three main subunits: a(1), b(2) and c(9-12). The alpha and beta chains form an alternating ring which encloses part of the gamma chain. CF(1) is attached to CF(0) by a central stalk formed by the gamma and epsilon chains, while a peripheral stalk is formed by the delta and b chains.

Its subcellular location is the cell inner membrane. The catalysed reaction is ATP + H2O + 4 H(+)(in) = ADP + phosphate + 5 H(+)(out). In terms of biological role, produces ATP from ADP in the presence of a proton gradient across the membrane. The catalytic sites are hosted primarily by the beta subunits. The sequence is that of ATP synthase subunit beta from Bacteroides fragilis (strain ATCC 25285 / DSM 2151 / CCUG 4856 / JCM 11019 / LMG 10263 / NCTC 9343 / Onslow / VPI 2553 / EN-2).